A 668-amino-acid polypeptide reads, in one-letter code: UvrABC system protein B (668 aa).

The Helicase ATP-binding domain maps to 31 to 188; sequence HGIEAGEKAQ…RKLVNIQFER (158 aa). An ATP-binding site is contributed by 44–51; the sequence is GATGTGKT. A Beta-hairpin motif is present at residues 97 to 120; that stretch reads YYDYYQPEAYVPSSDTYIEKDSSI. In terms of domain architecture, Helicase C-terminal spans 435-601; it reads QMDDLVGEIN…TIIKPIRDLI (167 aa). The UVR domain occupies 630–665; that stretch reads EKLIARLEDEMRAAAKKLDFEQAASLRDTIMDMKTE.

Belongs to the UvrB family. As to quaternary structure, forms a heterotetramer with UvrA during the search for lesions. Interacts with UvrC in an incision complex.

The protein localises to the cytoplasm. Its function is as follows. The UvrABC repair system catalyzes the recognition and processing of DNA lesions. A damage recognition complex composed of 2 UvrA and 2 UvrB subunits scans DNA for abnormalities. Upon binding of the UvrA(2)B(2) complex to a putative damaged site, the DNA wraps around one UvrB monomer. DNA wrap is dependent on ATP binding by UvrB and probably causes local melting of the DNA helix, facilitating insertion of UvrB beta-hairpin between the DNA strands. Then UvrB probes one DNA strand for the presence of a lesion. If a lesion is found the UvrA subunits dissociate and the UvrB-DNA preincision complex is formed. This complex is subsequently bound by UvrC and the second UvrB is released. If no lesion is found, the DNA wraps around the other UvrB subunit that will check the other stand for damage. This is UvrABC system protein B from Levilactobacillus brevis (strain ATCC 367 / BCRC 12310 / CIP 105137 / JCM 1170 / LMG 11437 / NCIMB 947 / NCTC 947) (Lactobacillus brevis).